The sequence spans 964 residues: Integrator complex subunit 7 (964 aa).

The segment covering 937-958 (QQLRHQLQQQQQNVPQPAAQRN) has biased composition (low complexity). The disordered stretch occupies residues 937–964 (QQLRHQLQQQQQNVPQPAAQRNISTRFQ).

The protein belongs to the Integrator subunit 7 family. As to quaternary structure, component of the Integrator complex, composed of core subunits INTS1, INTS2, INTS3, INTS4, INTS5, INTS6, INTS7, INTS8, INTS9/RC74, INTS10, INTS11/CPSF3L, INTS12, INTS13, INTS14 and INTS15. The core complex associates with protein phosphatase 2A subunits PPP2CA and PPP2R1A, to form the Integrator-PP2A (INTAC) complex.

The protein resides in the nucleus. The protein localises to the chromosome. Its subcellular location is the cytoplasm. Its function is as follows. Component of the integrator complex, a multiprotein complex that terminates RNA polymerase II (Pol II) transcription in the promoter-proximal region of genes. The integrator complex provides a quality checkpoint during transcription elongation by driving premature transcription termination of transcripts that are unfavorably configured for transcriptional elongation: the complex terminates transcription by (1) catalyzing dephosphorylation of the C-terminal domain (CTD) of Pol II subunit POLR2A/RPB1 and SUPT5H/SPT5, (2) degrading the exiting nascent RNA transcript via endonuclease activity and (3) promoting the release of Pol II from bound DNA. The integrator complex is also involved in terminating the synthesis of non-coding Pol II transcripts, such as enhancer RNAs (eRNAs), small nuclear RNAs (snRNAs), telomerase RNAs and long non-coding RNAs (lncRNAs). Essential during embryogenesis for eye development. The polypeptide is Integrator complex subunit 7 (ints7) (Danio rerio (Zebrafish)).